We begin with the raw amino-acid sequence, 392 residues long: GTPase Obg (392 aa).

Residues 1-159 (MKFVDEATIK…RELRLELLLL (159 aa)) enclose the Obg domain. The region spanning 160 to 333 (ADVGMLGLPN…VCNELSDFMD (174 aa)) is the OBG-type G domain. Residues 166–173 (GLPNAGKS), 191–195 (FTTLI), 213–216 (DIPG), 283–286 (NKTD), and 314–316 (AAV) each bind GTP. 2 residues coordinate Mg(2+): Ser-173 and Thr-193. Residues 364 to 392 (GKNVVTEDGDDDDDWDDEEDDGHVIYARD) form a disordered region. Positions 370-384 (EDGDDDDDWDDEEDD) are enriched in acidic residues.

The protein belongs to the TRAFAC class OBG-HflX-like GTPase superfamily. OBG GTPase family. In terms of assembly, monomer. Mg(2+) is required as a cofactor.

It is found in the cytoplasm. An essential GTPase which binds GTP, GDP and possibly (p)ppGpp with moderate affinity, with high nucleotide exchange rates and a fairly low GTP hydrolysis rate. Plays a role in control of the cell cycle, stress response, ribosome biogenesis and in those bacteria that undergo differentiation, in morphogenesis control. The chain is GTPase Obg from Aliivibrio salmonicida (strain LFI1238) (Vibrio salmonicida (strain LFI1238)).